The sequence spans 635 residues: Membrane protein insertase YidC (635 aa).

The helical transmembrane segment at 8–28 threads the bilayer; it reads LILAMVLSALVMLVWSIFFAP. Positions 33–61 are disordered; it reads PAQDTPAASTQGTAQPEAGGPATPGAVPQ. Helical transmembrane passes span 396 to 416, 470 to 490, 528 to 548, and 564 to 584; these read MIGN…LLVF, LPVL…FVTI, SFLH…SMWM, and IFAW…SGLV. The segment at 615-635 is disordered; that stretch reads IRSSLPSRAKAGDKGGDKGGK. Basic and acidic residues predominate over residues 624–635; the sequence is KAGDKGGDKGGK.

The protein belongs to the OXA1/ALB3/YidC family. Type 1 subfamily. Interacts with the Sec translocase complex via SecD. Specifically interacts with transmembrane segments of nascent integral membrane proteins during membrane integration.

Its subcellular location is the cell inner membrane. Functionally, required for the insertion and/or proper folding and/or complex formation of integral membrane proteins into the membrane. Involved in integration of membrane proteins that insert both dependently and independently of the Sec translocase complex, as well as at least some lipoproteins. Aids folding of multispanning membrane proteins. The protein is Membrane protein insertase YidC of Paracoccus denitrificans (strain Pd 1222).